Here is a 1106-residue protein sequence, read N- to C-terminus: Probable NAD-specific glutamate dehydrogenase (1106 aa).

The active site involves lysine 654.

The protein belongs to the Glu/Leu/Phe/Val dehydrogenases family. Homotetramer.

It localises to the cytoplasm. It carries out the reaction L-glutamate + NAD(+) + H2O = 2-oxoglutarate + NH4(+) + NADH + H(+). Functionally, NAD(+)-dependent glutamate dehydrogenase which degrades glutamate to ammonia and alpha-ketoglutarate. The protein is Probable NAD-specific glutamate dehydrogenase (gdh2) of Schizosaccharomyces pombe (strain 972 / ATCC 24843) (Fission yeast).